The sequence spans 264 residues: Regulatory protein RecX (264 aa).

Belongs to the RecX family.

It localises to the cytoplasm. Functionally, modulates RecA activity. This Lacticaseibacillus casei (strain BL23) (Lactobacillus casei) protein is Regulatory protein RecX.